The sequence spans 30 residues: Antifungal protein Lap (30 aa).

Functionally, displays antifungal activity against M.arachidicola and P.piricola, but not against R.solani, C.gossypii and C.comatus. Inhibits mycelial growth in P.piricola with an IC(50) of 70 nM. Displays very low cell-free translation inhibitory activity in a rabbit reticulocyte lysate system (IC(50)=70 uM) but is able to inhibit HIV-1 reverse transcriptase activity (IC(50)=5.2 nM). The sequence is that of Antifungal protein Lap from Lyophyllum shimeji (Hon-shimeji).